The primary structure comprises 120 residues: Ribosome-binding factor A (120 aa).

Belongs to the RbfA family. Monomer. Binds 30S ribosomal subunits, but not 50S ribosomal subunits or 70S ribosomes.

The protein resides in the cytoplasm. One of several proteins that assist in the late maturation steps of the functional core of the 30S ribosomal subunit. Associates with free 30S ribosomal subunits (but not with 30S subunits that are part of 70S ribosomes or polysomes). Required for efficient processing of 16S rRNA. May interact with the 5'-terminal helix region of 16S rRNA. This chain is Ribosome-binding factor A, found in Chlamydia caviae (strain ATCC VR-813 / DSM 19441 / 03DC25 / GPIC) (Chlamydophila caviae).